The following is a 183-amino-acid chain: MPRSQRNDNFIDKTFTILADILIRILPTTKREREAFIYYRDGMSAQSEGEYAEALGSYYKAMRLEIDSYDRSYILYNIGLIHTSNGNHAKALEYYFQALERNSFLPQAFNNMAVICHYRGEQAIYQGDLEISEAWFDQAAEYWRRAIALSPDNYAEAQNWLKITGRFSPSHRWESWNNSTRVA.

TPR repeat units lie at residues 35–68 (AFIY…EIDS), 72–105 (SYIL…NSFL), and 120–153 (GEQA…SPDN).

Belongs to the Ycf3 family.

The protein resides in the plastid. It localises to the chloroplast thylakoid membrane. In terms of biological role, essential for the assembly of the photosystem I (PSI) complex. May act as a chaperone-like factor to guide the assembly of the PSI subunits. The protein is Photosystem I assembly protein Ycf3 of Adiantum capillus-veneris (Maidenhair fern).